Consider the following 454-residue polypeptide: Metalloprotease MTH_856 (454 aa).

Positions 92–115 (QVGSGAPSVDKTMVRSSRPPSDVP) are disordered.

Belongs to the peptidase U62 family.

Functionally, probable metalloprotease. In Methanothermobacter thermautotrophicus (strain ATCC 29096 / DSM 1053 / JCM 10044 / NBRC 100330 / Delta H) (Methanobacterium thermoautotrophicum), this protein is Metalloprotease MTH_856.